We begin with the raw amino-acid sequence, 264 residues long: S-adenosylmethionine decarboxylase proenzyme (264 aa).

The active-site Schiff-base intermediate with substrate; via pyruvic acid is the Ser113. Position 113 is a pyruvic acid (Ser); by autocatalysis (Ser113). His118 serves as the catalytic Proton acceptor; for processing activity. The active-site Proton donor; for catalytic activity is the Cys141.

Belongs to the prokaryotic AdoMetDC family. Type 2 subfamily. In terms of assembly, heterooctamer of four alpha and four beta chains arranged as a tetramer of alpha/beta heterodimers. Requires pyruvate as cofactor. Is synthesized initially as an inactive proenzyme. Formation of the active enzyme involves a self-maturation process in which the active site pyruvoyl group is generated from an internal serine residue via an autocatalytic post-translational modification. Two non-identical subunits are generated from the proenzyme in this reaction, and the pyruvate is formed at the N-terminus of the alpha chain, which is derived from the carboxyl end of the proenzyme. The post-translation cleavage follows an unusual pathway, termed non-hydrolytic serinolysis, in which the side chain hydroxyl group of the serine supplies its oxygen atom to form the C-terminus of the beta chain, while the remainder of the serine residue undergoes an oxidative deamination to produce ammonia and the pyruvoyl group blocking the N-terminus of the alpha chain.

The catalysed reaction is S-adenosyl-L-methionine + H(+) = S-adenosyl 3-(methylsulfanyl)propylamine + CO2. The protein operates within amine and polyamine biosynthesis; S-adenosylmethioninamine biosynthesis; S-adenosylmethioninamine from S-adenosyl-L-methionine: step 1/1. Functionally, catalyzes the decarboxylation of S-adenosylmethionine to S-adenosylmethioninamine (dcAdoMet), the propylamine donor required for the synthesis of the polyamines spermine and spermidine from the diamine putrescine. The chain is S-adenosylmethionine decarboxylase proenzyme from Stenotrophomonas maltophilia (strain R551-3).